Consider the following 96-residue polypeptide: Large ribosomal subunit protein uL23 (96 aa).

The protein belongs to the universal ribosomal protein uL23 family. Part of the 50S ribosomal subunit. Contacts protein L29, and trigger factor when it is bound to the ribosome.

Functionally, one of the early assembly proteins it binds 23S rRNA. One of the proteins that surrounds the polypeptide exit tunnel on the outside of the ribosome. Forms the main docking site for trigger factor binding to the ribosome. This is Large ribosomal subunit protein uL23 from Maridesulfovibrio salexigens (strain ATCC 14822 / DSM 2638 / NCIMB 8403 / VKM B-1763) (Desulfovibrio salexigens).